A 203-amino-acid polypeptide reads, in one-letter code: 3-isopropylmalate dehydratase small subunit (203 aa).

It belongs to the LeuD family. LeuD type 1 subfamily. Heterodimer of LeuC and LeuD.

The enzyme catalyses (2R,3S)-3-isopropylmalate = (2S)-2-isopropylmalate. The protein operates within amino-acid biosynthesis; L-leucine biosynthesis; L-leucine from 3-methyl-2-oxobutanoate: step 2/4. In terms of biological role, catalyzes the isomerization between 2-isopropylmalate and 3-isopropylmalate, via the formation of 2-isopropylmaleate. The sequence is that of 3-isopropylmalate dehydratase small subunit from Pelagibacter ubique (strain HTCC1062).